The chain runs to 528 residues: (R)-citramalate synthase (528 aa).

In terms of domain architecture, Pyruvate carboxyltransferase spans V4–R266.

Belongs to the alpha-IPM synthase/homocitrate synthase family.

The enzyme catalyses pyruvate + acetyl-CoA + H2O = (3R)-citramalate + CoA + H(+). It participates in amino-acid biosynthesis; L-isoleucine biosynthesis; 2-oxobutanoate from pyruvate: step 1/3. Catalyzes the condensation of pyruvate and acetyl-coenzyme A to form (R)-citramalate. Makes part of the main pathway for isoleucine biosynthesis in G.sulfurreducens, i.e. the citramalate-dependent pathway. This is (R)-citramalate synthase from Geobacter sulfurreducens (strain ATCC 51573 / DSM 12127 / PCA).